The following is a 59-amino-acid chain: Toxin TxpA (59 aa).

A helical transmembrane segment spans residues 7–27 (LMVMIGFANLIGGIMTWVISL).

It is found in the cell membrane. Functionally, toxic component of a type I toxin-antitoxin (TA) system. Overexpression of txpA causes cell lysis; the TxpA protein has been suggested to act on the cell membrane or might possibly block cell wall synthesis. Overexpression in E.coli is not toxic. In Bacillus subtilis (strain 168), this protein is Toxin TxpA.